Consider the following 374-residue polypeptide: Outer membrane protein assembly factor BamC (374 aa).

Residues 1 to 22 (MSKFYKSGRVTTAVIVALSLSA) form the signal peptide. Cys-23 carries N-palmitoyl cysteine lipidation. Cys-23 carries the S-diacylglycerol cysteine lipid modification.

It belongs to the BamC family. Part of the Bam complex.

It localises to the cell outer membrane. In terms of biological role, part of the outer membrane protein assembly complex, which is involved in assembly and insertion of beta-barrel proteins into the outer membrane. The protein is Outer membrane protein assembly factor BamC of Psychromonas ingrahamii (strain DSM 17664 / CCUG 51855 / 37).